The chain runs to 465 residues: Type II restriction enzyme BsuMI component YdjA (465 aa).

As to quaternary structure, bsuMI restriction activity requires YdiR, YdiS and YdjA.

It catalyses the reaction Endonucleolytic cleavage of DNA to give specific double-stranded fragments with terminal 5'-phosphates.. In terms of biological role, a P subtype restriction enzyme that recognizes the double-stranded sequence 5'-CTCGAG-3'; the cleavage site is unknown. This Bacillus subtilis (strain 168) protein is Type II restriction enzyme BsuMI component YdjA (ydjA).